Here is a 246-residue protein sequence, read N- to C-terminus: Mast cell protease 1 (246 aa).

Residues 1 to 18 (MQALLFLLALLWPPEAGA) form the signal peptide. Positions 19–20 (EE) are cleaved as a propeptide — activation peptide. Residues 21-244 (IIGGVESKPH…YVPWINLVIR (224 aa)) form the Peptidase S1 domain. The cysteines at positions 50 and 66 are disulfide-linked. Active-site charge relay system residues include His65 and Asp109. 2 disulfide bridges follow: Cys143–Cys208 and Cys174–Cys187. Ser202 serves as the catalytic Charge relay system.

The protein belongs to the peptidase S1 family. Granzyme subfamily.

The sequence is that of Mast cell protease 1 from Meriones unguiculatus (Mongolian jird).